We begin with the raw amino-acid sequence, 525 residues long: G patch domain-containing protein 3 (525 aa).

Disordered stretches follow at residues 54-85 (ERGP…PASD) and 246-317 (EQEE…QERT). Acidic residues predominate over residues 274-299 (DEPEDEGQQQEEEEESGSEEDDDRGE). Basic and acidic residues predominate over residues 300–317 (EWERHEALHEDVTGQERT). One can recognise a G-patch domain in the interval 411 to 459 (TKGIGRKVMERQGWAEGQGLGSRCSGVPEALDGDGQHPRCKRGLGYHGE).

Interacts with mitochondrial MAVS; the interaction is markedly increased upon viral infection.

The protein localises to the nucleus. Its subcellular location is the cytoplasm. Its function is as follows. Involved in transcriptional regulation. It is able to activate transcription from CXCR4 promoter and therefore it might control neural crest cell migration involved in ocular and craniofacial development. Is a negative regulator of immune antiviral response, acting via down-regulation of RIG-I-like receptors signaling and inhibition of type I interferon production. The control mechanism involves interaction with mitochondrial MAVS and inhibition of MAVS assembly with downstream proteins implicated in antiviral response, such as TBK1 and TRAF6. The sequence is that of G patch domain-containing protein 3 (Gpatch3) from Mus musculus (Mouse).